Here is a 555-residue protein sequence, read N- to C-terminus: MAKYIFVTGGVASSVGKGITVASIGRLLKARGVRVSVQKLDPYINVDPGTMSPYQHGEVFVTEDGAETDLDLGHYERFIDVNLTRLSNVTTGQIYSAVIQKERRGDYLGGTIQVIPHITNEIKARIAAVARQTGAEVVIVEIGGTVGDIEGLPFLEAIRQMRKDVGRDNVLYIHVTLLPHIGATGEVKTKPTQHSVMELRRVGITADVIVCRSDYPIADEIRDKIALFADVDVEAVVPLHTVESIYEVPLVLEEAGLGNYLTLRLGLGVREPNLDDWRDLVARIKAPKRKLAIALVGKYVELHDAYISVVEALRHAGLHQGVDVDIRWISSEQIEEEGCEPLLRDVYGIVVPGGFGDRGIEGKIAAAGYAREHGVPYLGLCLGMQVATISFARHVIGAESRANSTEFDLHTPHPVIDFMPDQLDITDKGGTMRLGGYPCRLLPGTRAHAAYGVDQVVERHRHRFEFNNKYRRLLESAGLVVSGQSPDGRLVEIIELRDHPWYVGVQFHPEFRSRPERPHPLFRDFIAAAAQTFREGDQRPLPLEQNGTVGAAVKA.

An amidoligase domain region spans residues 1-267 (MAKYIFVTGG…GNYLTLRLGL (267 aa)). Ser13 is a binding site for CTP. Ser13 is a UTP binding site. 14–19 (SVGKGI) serves as a coordination point for ATP. An L-glutamine-binding site is contributed by Tyr54. Asp71 contacts ATP. The Mg(2+) site is built by Asp71 and Glu141. CTP contacts are provided by residues 148–150 (DIE), 188–193 (KTKPTQ), and Lys224. UTP-binding positions include 188 to 193 (KTKPTQ) and Lys224. In terms of domain architecture, Glutamine amidotransferase type-1 spans 292 to 535 (AIALVGKYVE…IAAAAQTFRE (244 aa)). Residue Gly354 coordinates L-glutamine. Catalysis depends on Cys381, which acts as the Nucleophile; for glutamine hydrolysis. L-glutamine contacts are provided by residues 382-385 (LGMQ), Glu406, and Arg463. Catalysis depends on residues His508 and Glu510.

The protein belongs to the CTP synthase family. Homotetramer.

It carries out the reaction UTP + L-glutamine + ATP + H2O = CTP + L-glutamate + ADP + phosphate + 2 H(+). The enzyme catalyses L-glutamine + H2O = L-glutamate + NH4(+). It catalyses the reaction UTP + NH4(+) + ATP = CTP + ADP + phosphate + 2 H(+). It participates in pyrimidine metabolism; CTP biosynthesis via de novo pathway; CTP from UDP: step 2/2. Its activity is regulated as follows. Allosterically activated by GTP, when glutamine is the substrate; GTP has no effect on the reaction when ammonia is the substrate. The allosteric effector GTP functions by stabilizing the protein conformation that binds the tetrahedral intermediate(s) formed during glutamine hydrolysis. Inhibited by the product CTP, via allosteric rather than competitive inhibition. In terms of biological role, catalyzes the ATP-dependent amination of UTP to CTP with either L-glutamine or ammonia as the source of nitrogen. Regulates intracellular CTP levels through interactions with the four ribonucleotide triphosphates. In Roseiflexus castenholzii (strain DSM 13941 / HLO8), this protein is CTP synthase.